The primary structure comprises 430 residues: MTSVVVVGTQWGDEGKGKITDFLSADAEVIARYQGGDNAGHTIVIDGKKFKLHLIPSGIFFPQKISVIGNGVVVNPKSLVKELAYLHDEGVTTDNLRISDRAHVILPYHIQLDQLQEDAKGDNKIGTTIKGIGPAYMDKAARVGIRIADLLDKDIFAERLRINLAEKNRLFEKMYNSTPLDFDAIFEEYYAYGQEIKQYVTDTSVILNDALDAGKRVLFEGAQGVMLDIDQGTYPFVTSSNPVAGGVTIGSGVGPSKINKVVGVCKAYTSRVGDGPFPTELFDEVGERIREVGHEYGTTTGRPRRVGWFDSVVMRHSRRVSGITNLSLNSIDVLSGLDTVKICVAYDLDGKRIDYYPASLEQLKRCKPIYEELPGWQEDITGVRSLDELPENARNYVRRVGELVGVRISTFSVGPGREQTNILESVWASI.

GTP is bound by residues 12 to 18 and 40 to 42; these read GDEGKGK and GHT. Asp13 (proton acceptor) is an active-site residue. Asp13 and Gly40 together coordinate Mg(2+). IMP-binding positions include 13–16, 38–41, Thr128, Arg142, Gln223, Thr238, and Arg302; these read DEGK and NAGH. His41 functions as the Proton donor in the catalytic mechanism. Residue 298–304 participates in substrate binding; sequence TTTGRPR. GTP-binding positions include Arg304, 330–332, and 412–414; these read SID and SVG.

The protein belongs to the adenylosuccinate synthetase family. Homodimer. Mg(2+) serves as cofactor.

It localises to the cytoplasm. The catalysed reaction is IMP + L-aspartate + GTP = N(6)-(1,2-dicarboxyethyl)-AMP + GDP + phosphate + 2 H(+). It participates in purine metabolism; AMP biosynthesis via de novo pathway; AMP from IMP: step 1/2. Functionally, plays an important role in the de novo pathway of purine nucleotide biosynthesis. Catalyzes the first committed step in the biosynthesis of AMP from IMP. This is Adenylosuccinate synthetase from Streptococcus pyogenes serotype M3 (strain ATCC BAA-595 / MGAS315).